The following is a 201-amino-acid chain: Rac-like GTP-binding protein ARAC2 (201 aa).

13 to 20 (GDGAVGKT) is a binding site for GTP. Residues 35-43 (YVPTVFDNF) carry the Effector region motif. Residues 60–64 (DTAGQ) and 118–121 (TKLD) contribute to the GTP site. Cys-198 carries the cysteine methyl ester modification. Cys-198 carries S-geranylgeranyl cysteine lipidation. The propeptide at 199–201 (FFL) is removed in mature form.

The protein belongs to the small GTPase superfamily. Rho family. Expressed exclusively in the root, hypocotyl and stem.

It localises to the cytoplasm. The protein resides in the membrane. Functionally, inactive GDP-bound Rho GTPases reside in the cytosol, are found in a complex with Rho GDP-dissociation inhibitors (Rho GDIs), and are released from the GDI protein in order to translocate to membranes upon activation. The sequence is that of Rac-like GTP-binding protein ARAC2 (ARAC2) from Arabidopsis thaliana (Mouse-ear cress).